The sequence spans 831 residues: Leucine--tRNA ligase (831 aa).

A 'HIGH' region motif is present at residues P36–H46. The 'KMSKS' region motif lies at K607–S611. Residue K610 participates in ATP binding.

It belongs to the class-I aminoacyl-tRNA synthetase family.

It localises to the cytoplasm. It carries out the reaction tRNA(Leu) + L-leucine + ATP = L-leucyl-tRNA(Leu) + AMP + diphosphate. The protein is Leucine--tRNA ligase of Neorickettsia sennetsu (strain ATCC VR-367 / Miyayama) (Ehrlichia sennetsu).